The sequence spans 145 residues: I-leader protein (145 aa).

Its subcellular location is the host cytoplasm. It localises to the host perinuclear region. This chain is I-leader protein, found in Human adenovirus C serotype 2 (HAdV-2).